The chain runs to 147 residues: Antiholin-like protein LrgA (147 aa).

Transmembrane regions (helical) follow at residues 12–32 (PAHFFHQVIVIALVLFVSKII), 35–55 (FMPIPMPGSVIGLVLLFVLLC), 74–94 (NIGLLFVPAGISVVNSLGVIS), and 98–118 (FLIIGLIIVSTILLLICTGYV).

The protein belongs to the CidA/LrgA family. LrgA subfamily.

It is found in the cell membrane. Functionally, inhibits the expression or activity of extracellular murein hydrolases by interacting, possibly with LrgB, with the holin-like proteins CidA and/or CidB. The LrgAB and CidAB proteins may affect the proton motive force of the membrane. May be involved in programmed cell death (PCD), possibly triggering PCD in response to antibiotics and environmental stresses. This chain is Antiholin-like protein LrgA, found in Staphylococcus aureus (strain MSSA476).